The chain runs to 363 residues: Dual-specificity RNA methyltransferase RlmN (363 aa).

Glutamate 102 functions as the Proton acceptor in the catalytic mechanism. In terms of domain architecture, Radical SAM core spans 108-344 (EKKRSTLCVS…TTTIRKNRGE (237 aa)). A disulfide bridge links cysteine 115 with cysteine 350. Residues cysteine 122, cysteine 126, and cysteine 129 each contribute to the [4Fe-4S] cluster site. Residues 174–175 (GE), serine 206, 228–230 (SLH), and asparagine 307 contribute to the S-adenosyl-L-methionine site. The active-site S-methylcysteine intermediate is the cysteine 350.

Belongs to the radical SAM superfamily. RlmN family. [4Fe-4S] cluster is required as a cofactor.

The protein localises to the cytoplasm. The enzyme catalyses adenosine(2503) in 23S rRNA + 2 reduced [2Fe-2S]-[ferredoxin] + 2 S-adenosyl-L-methionine = 2-methyladenosine(2503) in 23S rRNA + 5'-deoxyadenosine + L-methionine + 2 oxidized [2Fe-2S]-[ferredoxin] + S-adenosyl-L-homocysteine. The catalysed reaction is adenosine(37) in tRNA + 2 reduced [2Fe-2S]-[ferredoxin] + 2 S-adenosyl-L-methionine = 2-methyladenosine(37) in tRNA + 5'-deoxyadenosine + L-methionine + 2 oxidized [2Fe-2S]-[ferredoxin] + S-adenosyl-L-homocysteine. Functionally, specifically methylates position 2 of adenine 2503 in 23S rRNA and position 2 of adenine 37 in tRNAs. m2A2503 modification seems to play a crucial role in the proofreading step occurring at the peptidyl transferase center and thus would serve to optimize ribosomal fidelity. The sequence is that of Dual-specificity RNA methyltransferase RlmN from Buchnera aphidicola subsp. Acyrthosiphon pisum (strain APS) (Acyrthosiphon pisum symbiotic bacterium).